A 33-amino-acid polypeptide reads, in one-letter code: Helofensin-1 (33 aa).

It belongs to the beta-defensin family. Helofensin subfamily. In terms of tissue distribution, expressed by the venom gland.

The protein resides in the secreted. Its function is as follows. Lethal toxin which possesses an inhibitory effect on direct electrical stimulation of the isolated hemi-diaphragm. Neither hemorrhagic nor hemolytic activities are detected. Phospholipase A2 activity, proteolytic activity and arginine esterolytic activity are absent. This chain is Helofensin-1, found in Heloderma horridum horridum (Mexican beaded lizard).